The following is a 466-amino-acid chain: ATP synthase subunit beta (466 aa).

Residue 153–160 (GGAGVGKT) participates in ATP binding.

This sequence belongs to the ATPase alpha/beta chains family. F-type ATPases have 2 components, CF(1) - the catalytic core - and CF(0) - the membrane proton channel. CF(1) has five subunits: alpha(3), beta(3), gamma(1), delta(1), epsilon(1). CF(0) has three main subunits: a(1), b(2) and c(9-12). The alpha and beta chains form an alternating ring which encloses part of the gamma chain. CF(1) is attached to CF(0) by a central stalk formed by the gamma and epsilon chains, while a peripheral stalk is formed by the delta and b chains.

Its subcellular location is the cell membrane. It carries out the reaction ATP + H2O + 4 H(+)(in) = ADP + phosphate + 5 H(+)(out). In terms of biological role, produces ATP from ADP in the presence of a proton gradient across the membrane. The catalytic sites are hosted primarily by the beta subunits. The chain is ATP synthase subunit beta from Oenococcus oeni (strain ATCC BAA-331 / PSU-1).